Reading from the N-terminus, the 200-residue chain is High mobility group protein B3 (200 aa).

N6-acetyllysine is present on K3. 2 consecutive DNA-binding regions (HMG box) follow at residues 9–79 and 93–161; these read PKGK…KDYG and PKRP…ADYK. At C23 the chain carries Cysteine sulfonic acid (-SO3H); alternate. C23 and C45 form a disulfide bridge. K30 and K43 each carry N6-acetyllysine. Residue C45 is modified to Cysteine sulfonic acid (-SO3H); alternate. Residues 71–97 form a disordered region; that stretch reads YDREMKDYGPAKGGKKKKDPNAPKRPP. At S98 the chain carries Phosphoserine. Cysteine sulfonic acid (-SO3H) is present on C104. Residues K112 and K139 each carry the N6-acetyllysine modification. Residues 161–200 are disordered; the sequence is KSKGKFDGAKGPAKVARKKVEEEEEEEEEEEEEEEEEEDE. Positions 182 to 200 are enriched in acidic residues; sequence EEEEEEEEEEEEEEEEEDE.

It belongs to the HMGB family. Post-translationally, reduction/oxidation of cysteine residues Cys-23, Cys-45 and Cys-104 and a possible intramolecular disulfide bond involving Cys-23 and Cys-45 give rise to different redox forms with specific functional activities in various cellular compartments: 1- fully reduced HMGB3 (HMGB3C23hC45hC104h), 2- disulfide HMGB3 (HMGB3C23-C45C104h) and 3- sulfonyl HMGB3 (HMGB3C23soC45soC104so). Expressed in bone marrow cells, specifically in primitive Lin-, c-kit+, Sca-1+, IL-7Ralpha- cells, and Ter119+ erythroid cells.

It is found in the nucleus. The protein resides in the chromosome. It localises to the cytoplasm. Multifunctional protein with various roles in different cellular compartments. May act in a redox sensitive manner. Associates with chromatin and binds DNA with a preference for non-canonical DNA structures such as single-stranded DNA. Can bend DNA and enhance DNA flexibility by looping thus providing a mechanism to promote activities on various gene promoters. Proposed to be involved in the innate immune response to nucleic acids by acting as a cytoplasmic promiscuous immunogenic DNA/RNA sensor. Negatively regulates B-cell and myeloid cell differentiation. In hematopoietic stem cells may regulate the balance between self-renewal and differentiation. Involved in negative regulation of canonical Wnt signaling. The protein is High mobility group protein B3 (Hmgb3) of Mus musculus (Mouse).